We begin with the raw amino-acid sequence, 277 residues long: Large ribosomal subunit protein uL2 (277 aa).

Residues 219–277 (TVRGSVMNPNDHPHGGGEGRSPIGHPSPRTPWGKPALGYKTRKNKKYSDRFIVKRRHDK) form a disordered region.

Belongs to the universal ribosomal protein uL2 family. Part of the 50S ribosomal subunit. Forms a bridge to the 30S subunit in the 70S ribosome.

In terms of biological role, one of the primary rRNA binding proteins. Required for association of the 30S and 50S subunits to form the 70S ribosome, for tRNA binding and peptide bond formation. It has been suggested to have peptidyltransferase activity; this is somewhat controversial. Makes several contacts with the 16S rRNA in the 70S ribosome. This Clostridium botulinum (strain 657 / Type Ba4) protein is Large ribosomal subunit protein uL2.